The sequence spans 259 residues: HTH-type transcriptional regulator Rv1719 (259 aa).

The region spanning 13-75 (IQVIARAAEL…GARGPYRLGP (63 aa)) is the HTH iclR-type domain. The H-T-H motif DNA-binding region spans 35 to 54 (QAEIGERVGMARSTVSRILN). An IclR-ED domain is found at 88-259 (VVTEMHPFLT…AWFNGTEDRK (172 aa)).

As to quaternary structure, homodimer.

In terms of biological role, binds to the upstream region of Rv1714 and probably modulates the expression of the downstream gene(s). This is HTH-type transcriptional regulator Rv1719 from Mycobacterium tuberculosis (strain ATCC 25618 / H37Rv).